A 641-amino-acid polypeptide reads, in one-letter code: XK-related protein 6 (641 aa).

Disordered regions lie at residues 20–47 (LDEAVGSGGEEDGEPGGGGCGGGGDGSE) and 84–120 (RSAAADGGDQPLQPPAAPGAGRQPPTPSAARPEPPPP). Over residues 34–46 (PGGGGCGGGGDGS) the composition is skewed to gly residues. The segment covering 107–120 (PPTPSAARPEPPPP) has biased composition (pro residues). Helical transmembrane passes span 130–150 (LWIVLALLVFFGDVGTDLWLA), 159–179 (YVYFGLTLFFVLVPSLLVQSL), 318–338 (TLPCVSSVTSLMSLAWVLASY), 372–392 (VISFALFASIFQLYFGIFVVV), 413–433 (WEEILFNMVVGIVYIFCWFNV), 442–462 (MFAYYTIVLTENAALTFLWYF), and 473–493 (AVPALCCVFISFVAGIAMMLL).

Belongs to the XK family.

It localises to the cell membrane. The chain is XK-related protein 6 from Homo sapiens (Human).